A 214-amino-acid chain; its full sequence is 3-isopropylmalate dehydratase small subunit (214 aa).

It belongs to the LeuD family. LeuD type 1 subfamily. As to quaternary structure, heterodimer of LeuC and LeuD.

The enzyme catalyses (2R,3S)-3-isopropylmalate = (2S)-2-isopropylmalate. It functions in the pathway amino-acid biosynthesis; L-leucine biosynthesis; L-leucine from 3-methyl-2-oxobutanoate: step 2/4. Functionally, catalyzes the isomerization between 2-isopropylmalate and 3-isopropylmalate, via the formation of 2-isopropylmaleate. The polypeptide is 3-isopropylmalate dehydratase small subunit (Pseudomonas entomophila (strain L48)).